The following is a 3620-amino-acid chain: Cubilin (3620 aa).

An N-terminal signal peptide occupies residues 1 to 20 (MSSPFLWSLIILLTFAESNG). Residues 21–32 (EAGGFELQRQKR) constitute a propeptide, removed in mature form. Residues 39–46 (PRMATERG) form an interaction with AMN region. N-linked (GlcNAc...) asparagine glycosylation is present at Asn102. An EGF-like 1 domain is found at 129–165 (DKKVCSSNPCQNGGTCLNLHDSFFCICPSQWKGPLCS). Disulfide bonds link Cys133/Cys144, Cys138/Cys153, Cys155/Cys164, Cys171/Cys187, Cys181/Cys196, and Cys198/Cys207. One can recognise an EGF-like 2; calcium-binding domain in the interval 167 to 208 (DVNECQIYSGTPLGCQNGATCENTAGSYSCLCSPETHGPQCA). Residue Asn253 is glycosylated (N-linked (GlcNAc...) asparagine). An EGF-like 3; calcium-binding domain is found at 260–301 (DIDECNLQHAPCSPLVQCFNTQGSFYCGACPTGWQGNGYSCQ). 19 cysteine pairs are disulfide-bonded: Cys264-Cys277, Cys271-Cys286, Cys289-Cys300, Cys306-Cys321, Cys313-Cys330, Cys333-Cys344, Cys350-Cys363, Cys357-Cys373, Cys396-Cys406, Cys401-Cys415, Cys417-Cys426, Cys433-Cys444, Cys438-Cys453, Cys455-Cys464, Cys471-Cys497, Cys524-Cys546, Cys587-Cys613, Cys640-Cys662, and Cys705-Cys730. An EGF-like 4; calcium-binding domain is found at 302-345 (DIDECKINNGGCSVVPPVMCVNTLGSYHCQACPPGYQGDGRVCT). 2 consecutive EGF-like domains span residues 346–382 (VIDI…YTGN) and 392–427 (LSDT…INCT). Asn425 carries an N-linked (GlcNAc...) asparagine glycan. Residues 429-465 (NINECLSNPCFNGGTCVDGVNAFSCECTRFWTGFLCQ) form the EGF-like 7; calcium-binding domain. CUB domains follow at residues 471-583 (CGGS…WETQ), 587-699 (CGGI…YLTS), 705-812 (CGGN…YQVA), 813-924 (CGGE…FSAA), 928-1038 (CGEI…YEAT), 1044-1158 (CMED…WDGS), 1162-1274 (CGGN…YQQT), 1275-1386 (CRNV…WFIH), 1388-1503 (CGGE…WQAV), 1507-1616 (CGGI…FNQV), 1617-1731 (CGGH…YAAS), 1735-1847 (CGGT…FTKI), and 1849-1960 (GNDN…WFAV). N-linked (GlcNAc...) asparagine glycosylation is found at Asn708 and Asn745. Cys757 and Cys775 are oxidised to a cystine. N-linked (GlcNAc...) asparagine glycosylation is present at Asn777. A disulfide bridge links Cys813 with Cys838. N-linked (GlcNAc...) asparagine glycosylation occurs at Asn853. 2 disulfides stabilise this stretch: Cys865-Cys887 and Cys928-Cys954. Asn953 carries N-linked (GlcNAc...) asparagine glycosylation. Residue Glu976 participates in Ca(2+) binding. Asn980 is a glycosylation site (N-linked (GlcNAc...) asparagine). Residues Cys981 and Cys1001 are joined by a disulfide bond. Ca(2+) is bound by residues Asp984, Asp1023, Asp1025, and Leu1026. Cys1044 and Cys1070 are oxidised to a cystine. Residues Glu1092, Asp1102, and Asp1143 each coordinate Ca(2+). Cys1099 and Cys1121 are disulfide-bonded. An intrachain disulfide couples Cys1162 to Cys1188. N-linked (GlcNAc...) asparagine glycosylation is present at Asn1165. Glu1210 contributes to the Ca(2+) binding site. The N-linked (GlcNAc...) asparagine glycan is linked to Asn1214. Cys1215 and Cys1237 are disulfide-bonded. Residues Asp1218, Asp1259, and Gln1262 each coordinate Ca(2+). A disulfide bridge connects residues Cys1275 and Cys1303. 2 N-linked (GlcNAc...) asparagine glycosylation sites follow: Asn1304 and Asn1316. Glu1325 provides a ligand contact to Ca(2+). Residue Asn1329 is glycosylated (N-linked (GlcNAc...) asparagine). Cys1330 and Cys1348 are disulfide-bonded. Residues Asp1333, Asp1370, and Val1372 each coordinate Ca(2+). 2 disulfide bridges follow: Cys1388–Cys1414 and Cys1441–Cys1463. Asn1497 carries an N-linked (GlcNAc...) asparagine glycan. An intrachain disulfide couples Cys1507 to Cys1533. The N-linked (GlcNAc...) asparagine glycan is linked to Asn1548. 5 disulfide bridges follow: Cys1560–Cys1578, Cys1617–Cys1644, Cys1672–Cys1694, Cys1735–Cys1761, and Cys1788–Cys1809. Asn1643 carries N-linked (GlcNAc...) asparagine glycosylation. Asn1799, Asn1816, and Asn1882 each carry an N-linked (GlcNAc...) asparagine glycan. Cys1902 and Cys1924 are disulfide-bonded. Asn1961 carries N-linked (GlcNAc...) asparagine glycosylation. Cystine bridges form between Cys1975–Cys2003 and Cys2029–Cys2051. 14 consecutive CUB domains span residues 1975–2088 (CGGF…FHKS), 2089–2210 (CGGY…YEAK), 2214–2331 (CGGN…YAIA), 2333–2445 (CGGR…FESS), 2449–2562 (CGGE…YTSS), 2567–2684 (CGGS…YSFT), 2686–2798 (CGGI…WNTQ), 2802–2916 (CGGI…FVSR), 2917–3032 (CGGN…YKIT), 3034–3147 (CGGV…FQQT), 3154–3271 (CGGY…YTTV), 3275–3392 (CGGT…IAGC), 3392–3504 (CNRE…WTSS), and 3508–3620 (CGGT…TWDS). 2 N-linked (GlcNAc...) asparagine glycosylation sites follow: Asn2082 and Asn2114. Intrachain disulfides connect Cys2089–Cys2115, Cys2214–Cys2244, and Cys2272–Cys2294. A glycan (N-linked (GlcNAc...) asparagine) is linked at Asn2317. A disulfide bond links Cys2333 and Cys2360. Asn2383 and Asn2397 each carry an N-linked (GlcNAc...) asparagine glycan. 3 disulfides stabilise this stretch: Cys2387/Cys2408, Cys2449/Cys2475, and Cys2502/Cys2524. 4 N-linked (GlcNAc...) asparagine glycosylation sites follow: Asn2528, Asn2578, Asn2589, and Asn2607. Cys2567 and Cys2596 are oxidised to a cystine. 7 cysteine pairs are disulfide-bonded: Cys2625-Cys2646, Cys2686-Cys2712, Cys2739-Cys2761, Cys2802-Cys2828, Cys2857-Cys2880, Cys2917-Cys2943, and Cys2974-Cys2996. Asn2810 carries an N-linked (GlcNAc...) asparagine glycan. Residues Asn2920, Asn2942, and Asn2986 are each glycosylated (N-linked (GlcNAc...) asparagine). Thr3005 bears the Phosphothreonine mark. 2 disulfide bridges follow: Cys3034-Cys3061 and Cys3088-Cys3110. N-linked (GlcNAc...) asparagine glycans are attached at residues Asn3039, Asn3100, and Asn3122. 2 disulfides stabilise this stretch: Cys3154–Cys3182 and Cys3212–Cys3234. 3 N-linked (GlcNAc...) asparagine glycosylation sites follow: Asn3265, Asn3280, and Asn3292. 2 cysteine pairs are disulfide-bonded: Cys3275–Cys3303 and Cys3329–Cys3351. A glycan (N-linked (GlcNAc...) asparagine) is linked at Asn3354. Cys3392 and Cys3418 form a disulfide bridge. 3 N-linked (GlcNAc...) asparagine glycosylation sites follow: Asn3427, Asn3454, and Asn3530. 3 disulfides stabilise this stretch: Cys3445–Cys3467, Cys3508–Cys3534, and Cys3561–Cys3583.

In terms of assembly, interacts with AMN. Component of the cubam complex composed of one CUBN trimer and one AMN chain. The cubam complex can dimerize. Interacts with LRP2 in a dual-receptor complex in a calcium-dependent manner. Found in a complex with PID1/PCLI1, LRP1 and CUBNI. Interacts with LRP1 and PID1/PCLI1. In terms of processing, the precursor is cleaved by a trans-Golgi proteinase furin, removing a propeptide. N-glycosylated. As to expression, detected in kidney cortex (at protein level). Detected in kidney, duodenum and jejunum.

It is found in the apical cell membrane. The protein localises to the cell membrane. Its subcellular location is the membrane. It localises to the coated pit. The protein resides in the endosome. It is found in the lysosome membrane. Endocytic receptor which plays a role in lipoprotein, vitamin and iron metabolism by facilitating their uptake. Acts together with LRP2 to mediate endocytosis of high-density lipoproteins, GC, hemoglobin, ALB, TF and SCGB1A1. Acts together with AMN to mediate endocytosis of the CBLIF-cobalamin complex. Binds to ALB, MB, Kappa and lambda-light chains, TF, hemoglobin, GC, SCGB1A1, APOA1, high density lipoprotein, and the CBLIF-cobalamin complex. Ligand binding requires calcium. Serves as important transporter in several absorptive epithelia, including intestine, renal proximal tubules and embryonic yolk sac. May play an important role in the development of the peri-implantation embryo through internalization of APOA1 and cholesterol. Binds to LGALS3 at the maternal-fetal interface. The polypeptide is Cubilin (CUBN) (Canis lupus familiaris (Dog)).